The following is a 623-amino-acid chain: Glutathione import ATP-binding protein GsiA (623 aa).

2 consecutive ABC transporter domains span residues 15–269 (VSGL…QTLL) and 325–564 (LRSG…RKLM). ATP contacts are provided by residues 49–56 (GESGSGKS) and 357–364 (GESGSGKS).

This sequence belongs to the ABC transporter superfamily. Glutathione importer (TC 3.A.1.5.11) family. The complex is composed of two ATP-binding proteins (GsiA), two transmembrane proteins (GsiC and GsiD) and a solute-binding protein (GsiB).

It is found in the cell inner membrane. The enzyme catalyses glutathione(out) + ATP + H2O = glutathione(in) + ADP + phosphate + H(+). In terms of biological role, part of the ABC transporter complex GsiABCD involved in glutathione import. Responsible for energy coupling to the transport system. In Salmonella typhi, this protein is Glutathione import ATP-binding protein GsiA.